The chain runs to 183 residues: Inner membrane-spanning protein YciB (183 aa).

Helical transmembrane passes span 19–39 (LYGV…QLIV), 53–73 (IMGI…DLNF), 76–96 (WKVT…QFVF), 121–141 (LGWA…SYYF), and 151–171 (TFGF…YLYP).

Belongs to the YciB family.

The protein resides in the cell inner membrane. In terms of biological role, plays a role in cell envelope biogenesis, maintenance of cell envelope integrity and membrane homeostasis. This chain is Inner membrane-spanning protein YciB, found in Actinobacillus pleuropneumoniae serotype 3 (strain JL03).